Reading from the N-terminus, the 330-residue chain is Aspartate--ammonia ligase (330 aa).

Belongs to the class-II aminoacyl-tRNA synthetase family. AsnA subfamily.

It is found in the cytoplasm. It catalyses the reaction L-aspartate + NH4(+) + ATP = L-asparagine + AMP + diphosphate + H(+). The protein operates within amino-acid biosynthesis; L-asparagine biosynthesis; L-asparagine from L-aspartate (ammonia route): step 1/1. The polypeptide is Aspartate--ammonia ligase (Streptococcus equi subsp. equi (strain 4047)).